A 232-amino-acid polypeptide reads, in one-letter code: Large ribosomal subunit protein uL1 (232 aa).

Belongs to the universal ribosomal protein uL1 family. As to quaternary structure, part of the 50S ribosomal subunit.

Functionally, binds directly to 23S rRNA. The L1 stalk is quite mobile in the ribosome, and is involved in E site tRNA release. Protein L1 is also a translational repressor protein, it controls the translation of the L11 operon by binding to its mRNA. The protein is Large ribosomal subunit protein uL1 of Aromatoleum aromaticum (strain DSM 19018 / LMG 30748 / EbN1) (Azoarcus sp. (strain EbN1)).